A 299-amino-acid chain; its full sequence is Putative arsenical pump-driving ATPase 2 (299 aa).

Gly8–Thr15 serves as a coordination point for ATP.

The protein belongs to the arsA ATPase family.

It carries out the reaction arsenite(in) + ATP + H2O = arsenite(out) + ADP + phosphate + H(+). In terms of biological role, anion-transporting ATPase. Catalyzes the extrusion of arsenite. This chain is Putative arsenical pump-driving ATPase 2 (arsA2), found in Aquifex aeolicus (strain VF5).